We begin with the raw amino-acid sequence, 395 residues long: uncharacterized protein (395 aa).

Disordered regions lie at residues M1 to S121, M136 to N187, Q308 to E335, and I365 to D395. The span at P13 to Q28 shows a compositional bias: basic and acidic residues. Basic residues predominate over residues K64–S73. The span at S97–E111 shows a compositional bias: basic and acidic residues. Positions T144–N164 are enriched in polar residues. Positions K170–G179 are enriched in basic residues. Positions I365 to K377 are enriched in basic residues. The span at K378 to D395 shows a compositional bias: basic and acidic residues.

This is an uncharacterized protein from Caenorhabditis elegans.